A 371-amino-acid chain; its full sequence is Cytochrome b (371 aa).

4 helical membrane passes run 25–45 (FGSM…FLAV), 69–90 (WMMQ…YIHI), 105–125 (WMSG…GYVL), and 170–190 (FFAL…LHII). Positions 75 and 89 each coordinate heme b. His174 and His188 together coordinate heme b. Position 193 (His193) interacts with a ubiquinone. Helical transmembrane passes span 218–238 (HKDL…MSFF), 280–300 (LGGA…PFTH), 312–332 (LSQL…WAAT), and 339–358 (FIII…LSFP).

This sequence belongs to the cytochrome b family. As to quaternary structure, the cytochrome bc1 complex contains 3 respiratory subunits (MT-CYB, CYC1 and UQCRFS1), 2 core proteins (UQCRC1 and UQCRC2) and probably 6 low-molecular weight proteins. Requires heme b as cofactor.

The protein resides in the mitochondrion inner membrane. Component of the ubiquinol-cytochrome c reductase complex (complex III or cytochrome b-c1 complex) that is part of the mitochondrial respiratory chain. The b-c1 complex mediates electron transfer from ubiquinol to cytochrome c. Contributes to the generation of a proton gradient across the mitochondrial membrane that is then used for ATP synthesis. This Apodora papuana (Papuan olive python) protein is Cytochrome b (MT-CYB).